The primary structure comprises 711 residues: Polyribonucleotide nucleotidyltransferase (711 aa).

The Mg(2+) site is built by D486 and D492. In terms of domain architecture, KH spans 553 to 612 (PRIHTIKINPDKIKDVIGKGGSVIRALTEETGTTIEIEDDGTVKIAATDGEKAKHAIRRI). The S1 motif domain occupies 622-690 (GRVYNGKVTR…RQGRIRLSIK (69 aa)). The tract at residues 689 to 711 (IKEATEQSQPAAAPEAPAAEQGE) is disordered. Residues 694-711 (EQSQPAAAPEAPAAEQGE) are compositionally biased toward low complexity.

The protein belongs to the polyribonucleotide nucleotidyltransferase family. Component of the RNA degradosome, which is a multiprotein complex involved in RNA processing and mRNA degradation. Requires Mg(2+) as cofactor.

The protein resides in the cytoplasm. The enzyme catalyses RNA(n+1) + phosphate = RNA(n) + a ribonucleoside 5'-diphosphate. Functionally, involved in mRNA degradation. Catalyzes the phosphorolysis of single-stranded polyribonucleotides processively in the 3'- to 5'-direction. This chain is Polyribonucleotide nucleotidyltransferase, found in Escherichia coli O6:K15:H31 (strain 536 / UPEC).